A 201-amino-acid chain; its full sequence is ATP-dependent Clp protease proteolytic subunit (201 aa).

Ser-105 serves as the catalytic Nucleophile. His-130 is an active-site residue.

It belongs to the peptidase S14 family. Fourteen ClpP subunits assemble into 2 heptameric rings which stack back to back to give a disk-like structure with a central cavity, resembling the structure of eukaryotic proteasomes.

The protein localises to the cytoplasm. The enzyme catalyses Hydrolysis of proteins to small peptides in the presence of ATP and magnesium. alpha-casein is the usual test substrate. In the absence of ATP, only oligopeptides shorter than five residues are hydrolyzed (such as succinyl-Leu-Tyr-|-NHMec, and Leu-Tyr-Leu-|-Tyr-Trp, in which cleavage of the -Tyr-|-Leu- and -Tyr-|-Trp bonds also occurs).. Its function is as follows. Cleaves peptides in various proteins in a process that requires ATP hydrolysis. Has a chymotrypsin-like activity. Plays a major role in the degradation of misfolded proteins. This is ATP-dependent Clp protease proteolytic subunit from Aquifex aeolicus (strain VF5).